A 354-amino-acid chain; its full sequence is Histidinol-phosphate aminotransferase (354 aa).

Lysine 222 is subject to N6-(pyridoxal phosphate)lysine.

This sequence belongs to the class-II pyridoxal-phosphate-dependent aminotransferase family. Histidinol-phosphate aminotransferase subfamily. Homodimer. The cofactor is pyridoxal 5'-phosphate.

It catalyses the reaction L-histidinol phosphate + 2-oxoglutarate = 3-(imidazol-4-yl)-2-oxopropyl phosphate + L-glutamate. Its pathway is amino-acid biosynthesis; L-histidine biosynthesis; L-histidine from 5-phospho-alpha-D-ribose 1-diphosphate: step 7/9. This Leuconostoc citreum (strain KM20) protein is Histidinol-phosphate aminotransferase.